The following is a 196-amino-acid chain: Elongation factor Ts (196 aa).

Residues 80–83 are involved in Mg(2+) ion dislocation from EF-Tu; the sequence is TDFV.

Belongs to the EF-Ts family.

Its subcellular location is the cytoplasm. In terms of biological role, associates with the EF-Tu.GDP complex and induces the exchange of GDP to GTP. It remains bound to the aminoacyl-tRNA.EF-Tu.GTP complex up to the GTP hydrolysis stage on the ribosome. This chain is Elongation factor Ts, found in Thermosipho melanesiensis (strain DSM 12029 / CIP 104789 / BI429).